Here is a 571-residue protein sequence, read N- to C-terminus: Proline--tRNA ligase (571 aa).

This sequence belongs to the class-II aminoacyl-tRNA synthetase family. ProS type 1 subfamily. Homodimer.

Its subcellular location is the cytoplasm. It carries out the reaction tRNA(Pro) + L-proline + ATP = L-prolyl-tRNA(Pro) + AMP + diphosphate. Functionally, catalyzes the attachment of proline to tRNA(Pro) in a two-step reaction: proline is first activated by ATP to form Pro-AMP and then transferred to the acceptor end of tRNA(Pro). As ProRS can inadvertently accommodate and process non-cognate amino acids such as alanine and cysteine, to avoid such errors it has two additional distinct editing activities against alanine. One activity is designated as 'pretransfer' editing and involves the tRNA(Pro)-independent hydrolysis of activated Ala-AMP. The other activity is designated 'posttransfer' editing and involves deacylation of mischarged Ala-tRNA(Pro). The misacylated Cys-tRNA(Pro) is not edited by ProRS. This chain is Proline--tRNA ligase, found in Thermodesulfovibrio yellowstonii (strain ATCC 51303 / DSM 11347 / YP87).